The sequence spans 285 residues: Glutamate racemase (285 aa).

Residues 28-29 (DS) and 60-61 (YG) contribute to the substrate site. Catalysis depends on Cys-92, which acts as the Proton donor/acceptor. 93 to 94 (NT) contributes to the substrate binding site. Cys-204 serves as the catalytic Proton donor/acceptor. 205–206 (TH) provides a ligand contact to substrate.

Belongs to the aspartate/glutamate racemases family.

The enzyme catalyses L-glutamate = D-glutamate. It functions in the pathway cell wall biogenesis; peptidoglycan biosynthesis. In terms of biological role, provides the (R)-glutamate required for cell wall biosynthesis. The polypeptide is Glutamate racemase (Escherichia coli O6:H1 (strain CFT073 / ATCC 700928 / UPEC)).